The chain runs to 365 residues: Gibberellin 20 oxidase 1-A (365 aa).

The Fe2OG dioxygenase domain maps to 199–299; the sequence is GNDSIMRLNY…RKSLAFFLCP (101 aa). Fe cation contacts are provided by histidine 224, aspartate 226, and histidine 280. Residue arginine 290 is part of the active site.

This sequence belongs to the iron/ascorbate-dependent oxidoreductase family. GA20OX subfamily. Fe cation is required as a cofactor. Requires L-ascorbate as cofactor. Expressed in nodes and the ear of the elongating stem.

The catalysed reaction is gibberellin A12 + 2 2-oxoglutarate + 3 O2 + H(+) = gibberellin A9 + 2 succinate + 3 CO2 + 2 H2O. It catalyses the reaction gibberellin A53 + 2 2-oxoglutarate + 3 O2 + H(+) = gibberellin A20 + 2 succinate + 3 CO2 + 2 H2O. Functionally, key oxidase enzyme in the biosynthesis of gibberellin that catalyzes the conversion of GA12 and GA53 to GA9 and GA20 respectively, via a three-step oxidation at C-20 of the GA skeleton. The polypeptide is Gibberellin 20 oxidase 1-A (GA20ox1A) (Triticum aestivum (Wheat)).